Reading from the N-terminus, the 172-residue chain is Adenine phosphoribosyltransferase (172 aa).

This sequence belongs to the purine/pyrimidine phosphoribosyltransferase family. In terms of assembly, homodimer.

It is found in the cytoplasm. The catalysed reaction is AMP + diphosphate = 5-phospho-alpha-D-ribose 1-diphosphate + adenine. Its pathway is purine metabolism; AMP biosynthesis via salvage pathway; AMP from adenine: step 1/1. In terms of biological role, catalyzes a salvage reaction resulting in the formation of AMP, that is energically less costly than de novo synthesis. In Prochlorococcus marinus (strain MIT 9313), this protein is Adenine phosphoribosyltransferase.